We begin with the raw amino-acid sequence, 290 residues long: Eukaryotic translation initiation factor 3 subunit G (290 aa).

Residues 1-34 are disordered; the sequence is MSRLGNRAADWADDEEFDDPSALPAQQVTTNKDG. Residues 210–288 form the RRM domain; it reads ATLRVTNVSE…LILRVEFAKR (79 aa).

This sequence belongs to the eIF-3 subunit G family. In terms of assembly, component of the eukaryotic translation initiation factor 3 (eIF-3) complex.

It is found in the cytoplasm. RNA-binding component of the eukaryotic translation initiation factor 3 (eIF-3) complex, which is involved in protein synthesis of a specialized repertoire of mRNAs and, together with other initiation factors, stimulates binding of mRNA and methionyl-tRNAi to the 40S ribosome. The eIF-3 complex specifically targets and initiates translation of a subset of mRNAs involved in cell proliferation. This subunit can bind 18S rRNA. The protein is Eukaryotic translation initiation factor 3 subunit G (tif35) of Aspergillus fumigatus (strain CBS 144.89 / FGSC A1163 / CEA10) (Neosartorya fumigata).